A 162-amino-acid polypeptide reads, in one-letter code: Protein-export protein SecB (162 aa).

It belongs to the SecB family. Homotetramer, a dimer of dimers. One homotetramer interacts with 1 SecA dimer.

The protein localises to the cytoplasm. Functionally, one of the proteins required for the normal export of preproteins out of the cell cytoplasm. It is a molecular chaperone that binds to a subset of precursor proteins, maintaining them in a translocation-competent state. It also specifically binds to its receptor SecA. In Legionella pneumophila (strain Paris), this protein is Protein-export protein SecB.